The primary structure comprises 581 residues: Metal transporter Nramp7.1 (581 aa).

Asn-11 and Asn-19 each carry an N-linked (GlcNAc...) asparagine glycan. 7 helical membrane-spanning segments follow: residues 57–77, 90–110, 146–166, 181–201, 224–244, 270–290, and 307–327; these read FLSY…PGNL, ELLW…SLAA, YCLW…EGII, LLIG…WVGV, LLIA…MSYV, IALL…ALVL, and YFLI…LAVI. A glycan (N-linked (GlcNAc...) asparagine) is linked at Asn-338. The next 5 helical transmembrane spans lie at 370-390, 409-429, 434-454, 473-493, and 513-533; these read IYAI…TYAG, LVTR…GGSS, LIII…FALI, IYII…NIYY, and VFIG…VIYL. Positions 551-581 are disordered; the sequence is PQQQANMENGLGPEMERVPYREDLADIPLPE. The segment covering 564-574 has biased composition (basic and acidic residues); it reads EMERVPYREDL.

The protein belongs to the NRAMP (TC 2.A.55) family.

The protein localises to the membrane. In terms of biological role, probable divalent metal transporter. The protein is Metal transporter Nramp7.1 of Populus trichocarpa (Western balsam poplar).